The chain runs to 296 residues: Factor associated with metabolism and energy (296 aa).

The N-myristoyl glycine moiety is linked to residue glycine 2. Composition is skewed to basic and acidic residues over residues 173–187 (SLHGEARINKQSPRD) and 267–281 (EQGKDEKKPRALVRT). Disordered regions lie at residues 173–204 (SLHGEARINKQSPRDHKAKKTLQSTPRNDDHD) and 256–281 (LLWDSSSSDSDEQGKDEKKPRALVRT).

It localises to the cell membrane. The protein resides in the cytoplasmic vesicle. In terms of biological role, may be involved in tuning the metabolism, energy expenditure, and excretion processes. This Homo sapiens (Human) protein is Factor associated with metabolism and energy.